We begin with the raw amino-acid sequence, 224 residues long: MKILYSFLLLPFFSCAFSVDSMIKFSGEDDFFLVNGNSKEREYIYVTLSELISEKNNRRDEIFYNADNVPLWPISAEPADIIISSGEQVKIKINKNYTPVGGDRIFGINFSPDTLNDNDRNQYNIPFGYKAWLIVPGTESESGTVDVSKVSEKNKYIIKNNTNKVMDVWADYCGSYNNNKCRVQLITRPYSEKKIEIDSNNNPIEFTFSIYIGRERKLIKRKIL.

A signal peptide spans 1-16 (MKILYSFLLLPFFSCA).

This is an uncharacterized protein from Escherichia coli.